The chain runs to 526 residues: Flavonoid 3'-monooxygenase CYP75B3 (526 aa).

A helical transmembrane segment spans residues 6-26 (LPLLLGSLAVSAAVWYLVYFL). C461 provides a ligand contact to heme.

The protein belongs to the cytochrome P450 family. Heme serves as cofactor.

It localises to the membrane. It carries out the reaction a 3'-unsubstituted flavone + reduced [NADPH--hemoprotein reductase] + O2 = a 3'-hydroxyflavone + oxidized [NADPH--hemoprotein reductase] + H2O + H(+). The protein operates within secondary metabolite biosynthesis; flavonoid biosynthesis. In terms of biological role, catalyzes the 3'-hydroxylation of the flavonoid B-ring to the 3',4'-hydroxylated state. Catalyzes the 3'-hydroxylation of apigenin to generate luteolin. The polypeptide is Flavonoid 3'-monooxygenase CYP75B3 (Oryza sativa subsp. japonica (Rice)).